Here is a 75-residue protein sequence, read N- to C-terminus: Protein SlyX homolog (75 aa).

Belongs to the SlyX family.

The polypeptide is Protein SlyX homolog (Vibrio atlanticus (strain LGP32) (Vibrio splendidus (strain Mel32))).